Here is a 289-residue protein sequence, read N- to C-terminus: G1/S-specific cyclin-D2 (289 aa).

Residues 26–151 (LQNLLTIEER…VLGKLKWNLA (126 aa)) form the Cyclin N-terminal domain. The interval 264-289 (QHNAGSKSVEDPDQATTPTDVRDVDL) is disordered. Position 271 is a phosphoserine (S271). Position 280 is a phosphothreonine (T280).

It belongs to the cyclin family. Cyclin D subfamily. In terms of assembly, interacts with either CDK4 or CDK6 protein kinase to form a serine/threonine kinase holoenzyme complex. The cyclin subunit imparts substrate specificity to the complex. In terms of processing, phosphorylation at Thr-280 by MAP kinases is required for ubiquitination and degradation by the DCX(AMBRA1) complex. Ubiquitinated by the DCX(AMBRA1) complex during the transition from G1 to S cell phase, leading to its degradation: ubiquitination is dependent on Thr-280 phosphorylation. The DCX(AMBRA1) complex represents the major regulator of CCND2 stability during the G1/S transition. Polyubiquitinated by the SCF(FBXL2) complex, leading to proteasomal degradation.

The protein resides in the nucleus. It is found in the cytoplasm. The protein localises to the nucleus membrane. Functionally, regulatory component of the cyclin D2-CDK4 (DC) complex that phosphorylates and inhibits members of the retinoblastoma (RB) protein family including RB1 and regulates the cell-cycle during G(1)/S transition. Phosphorylation of RB1 allows dissociation of the transcription factor E2F from the RB/E2F complex and the subsequent transcription of E2F target genes which are responsible for the progression through the G(1) phase. Hypophosphorylates RB1 in early G(1) phase. Cyclin D-CDK4 complexes are major integrators of various mitogenenic and antimitogenic signals. This is G1/S-specific cyclin-D2 from Mus musculus (Mouse).